The primary structure comprises 294 residues: MNMNHHDKLQRFLFDGAPVRGALVRLDGAWQQVLARRAYPQALKTVLGEMMAASVLMAANLKFDGSLILQIHGTGALKLAVVECNNDRTVRATAKWDGDLDGKPLKALLGEGGKFVLTLEPRLDKNQTWQGIVALEGDSVGQMLENYMLRSEQLDTALVLASGDEAAAGMLLQRLPEGHGEAEGWDRVQMLGRTLKAEELLGLGAEDILHRLFHEEQVRVFEQETVSFNCNCSRERVSNMLTMLGGQEVGDVLLEQGSVEIVCDYCNQRYVFDEEDANQLFDYDVVAAAREARH.

2 disulfide bridges follow: cysteine 230–cysteine 232 and cysteine 263–cysteine 266.

The protein belongs to the HSP33 family. Under oxidizing conditions two disulfide bonds are formed involving the reactive cysteines. Under reducing conditions zinc is bound to the reactive cysteines and the protein is inactive.

The protein localises to the cytoplasm. Its function is as follows. Redox regulated molecular chaperone. Protects both thermally unfolding and oxidatively damaged proteins from irreversible aggregation. Plays an important role in the bacterial defense system toward oxidative stress. This chain is 33 kDa chaperonin, found in Chromobacterium violaceum (strain ATCC 12472 / DSM 30191 / JCM 1249 / CCUG 213 / NBRC 12614 / NCIMB 9131 / NCTC 9757 / MK).